A 58-amino-acid chain; its full sequence is UPF0339 protein Msl4696 (58 aa).

Belongs to the UPF0339 family.

This Mesorhizobium japonicum (strain LMG 29417 / CECT 9101 / MAFF 303099) (Mesorhizobium loti (strain MAFF 303099)) protein is UPF0339 protein Msl4696.